Here is a 224-residue protein sequence, read N- to C-terminus: Orotate phosphoribosyltransferase (224 aa).

K29 provides a ligand contact to 5-phospho-alpha-D-ribose 1-diphosphate. Position 37 to 38 (37 to 38) interacts with orotate; it reads FF. 5-phospho-alpha-D-ribose 1-diphosphate-binding positions include 75–76, R105, K106, K109, H111, and 130–138; these read YK and DDVITAGTS. Residues T134 and R162 each coordinate orotate.

The protein belongs to the purine/pyrimidine phosphoribosyltransferase family. PyrE subfamily. As to quaternary structure, homodimer. It depends on Mg(2+) as a cofactor.

It catalyses the reaction orotidine 5'-phosphate + diphosphate = orotate + 5-phospho-alpha-D-ribose 1-diphosphate. Its pathway is pyrimidine metabolism; UMP biosynthesis via de novo pathway; UMP from orotate: step 1/2. Its function is as follows. Catalyzes the transfer of a ribosyl phosphate group from 5-phosphoribose 1-diphosphate to orotate, leading to the formation of orotidine monophosphate (OMP). In Bordetella pertussis (strain Tohama I / ATCC BAA-589 / NCTC 13251), this protein is Orotate phosphoribosyltransferase.